The sequence spans 129 residues: Ribosome-binding factor A (129 aa).

It belongs to the RbfA family. As to quaternary structure, monomer. Binds 30S ribosomal subunits, but not 50S ribosomal subunits or 70S ribosomes.

The protein localises to the cytoplasm. One of several proteins that assist in the late maturation steps of the functional core of the 30S ribosomal subunit. Associates with free 30S ribosomal subunits (but not with 30S subunits that are part of 70S ribosomes or polysomes). Required for efficient processing of 16S rRNA. May interact with the 5'-terminal helix region of 16S rRNA. This chain is Ribosome-binding factor A, found in Stutzerimonas stutzeri (strain A1501) (Pseudomonas stutzeri).